Here is a 209-residue protein sequence, read N- to C-terminus: MSRPVVVFEYGSGNVHSAVKALEAAGADVELTRDRRRAQEADGLVVPGVGAFAAVVDRLRAAHGDEIIERRLAGGRPVLGICVGMQVMFERGTEHGQETAGLGEWPGAVEPLCAGVVPHVGWNAVEAPADSVLFDGVWDERFYFVHSYAAQHWTLEATGPFPKPRVSWAEHGSRFVAAVENGPLSATQFHPEKSGSAGLRLLANWIGSL.

Residues 4-209 (PVVVFEYGSG…RLLANWIGSL (206 aa)) form the Glutamine amidotransferase type-1 domain. Residue Cys82 is the Nucleophile of the active site. Catalysis depends on residues His190 and Glu192.

As to quaternary structure, heterodimer of HisH and HisF.

It localises to the cytoplasm. The enzyme catalyses 5-[(5-phospho-1-deoxy-D-ribulos-1-ylimino)methylamino]-1-(5-phospho-beta-D-ribosyl)imidazole-4-carboxamide + L-glutamine = D-erythro-1-(imidazol-4-yl)glycerol 3-phosphate + 5-amino-1-(5-phospho-beta-D-ribosyl)imidazole-4-carboxamide + L-glutamate + H(+). It carries out the reaction L-glutamine + H2O = L-glutamate + NH4(+). Its pathway is amino-acid biosynthesis; L-histidine biosynthesis; L-histidine from 5-phospho-alpha-D-ribose 1-diphosphate: step 5/9. IGPS catalyzes the conversion of PRFAR and glutamine to IGP, AICAR and glutamate. The HisH subunit catalyzes the hydrolysis of glutamine to glutamate and ammonia as part of the synthesis of IGP and AICAR. The resulting ammonia molecule is channeled to the active site of HisF. The polypeptide is Imidazole glycerol phosphate synthase subunit HisH (Leifsonia xyli subsp. xyli (strain CTCB07)).